Reading from the N-terminus, the 1426-residue chain is Protein RhsD (1426 aa).

Residues 256–285 (AEEARTSSLSSSDSSRPLSASAFPDTLPGT) are disordered. A compositionally biased stretch (low complexity) spans 262–277 (SSLSSSDSSRPLSASA). Residues 320–1197 (YTEAGELLAV…LNEENPHHVY (878 aa)) are 28 X approximate tandem repeats. 27 tandem repeats follow at residues 334–356 (NTQVRAFTYDAQHPGRMVAHRYA), 357–378 (GRPEMRYRYDDTGRVVEQLNPA), 379–421 (GLSY…ELAD), 422–442 (GSVTRSGYDAAGRLTAQTDAA), 443–464 (GRRTEYGLNVVSGDITDITTPD), 465–485 (GRETKFYYNDGNQLTAVVSPD), 486–506 (GLESRREYDEPGRLVSETSRS), 507–529 (GETVRYRYDDAHSELPATTTDAT), 530–550 (GSTRQMTWSRYGQLLAFTDCS), 551–571 (GYQTRYEYDRFGQMTAVHREE), 572–592 (GISLYRRYDNRGRLTSVKDAQ), 593–613 (GRETRYEYNAAGDLTAVITPD), 614–633 (GNRSETQYDAWGKAVSTTQG), 634–654 (GLTRSMEYDAAGRVISLTNEN), 655–675 (GSHSVFSYDALDRLVQQGGFD), 676–695 (GRTQRYHYDLTGKLTQSEDE), 696–715 (GLVILWYYDESDRITHRTVN), 716–738 (GEPAEQWQYDGHGWLTDISHLSE), 739–762 (GHRVAVHYGYDDKGRLTGECQTVE), 812–832 (GGTPLVEYTRDRLHRETVRSF), 833–861 (GSMAGSNAAYELTSTYTPAGQLQSQHLNS), 862–882 (LVYDRDYGWSDNGDLVRISGP), 883–905 (RQTREYGYSATGRLESVRTLAPD), 906–941 (LDIRIPYATDPAGNRLPDPELHPDSTLTVWPDNRIA), 942–970 (EDAHYVYRHDEYGRLTEKTDRIPAGVIRT), 971–995 (DDERTHHYHYDSQHRLVFYTRIQHG), and 996–1030 (EPLVESRYLYDPLGRRMAKRVWRRERDLTGWMSLS). Residues 1073–1085 (ENGEREKAQRRSL) are compositionally biased toward basic and acidic residues. Residues 1073–1097 (ENGEREKAQRRSLAETLQQEGSENG) form a disordered region. Copy 28 of the repeat occupies 1173–1197 (GNTAWSAEYDEWGNQLNEENPHHVY).

The protein belongs to the RHS family.

Rhs elements have a nonessential function. They may play an important role in the natural ecology of the cell. The chain is Protein RhsD (rhsD) from Escherichia coli (strain K12).